The primary structure comprises 438 residues: Trigger factor (438 aa).

The PPIase FKBP-type domain maps to 163-248 (GDIITIDYEG…VKEIKRKELA (86 aa)).

The protein belongs to the FKBP-type PPIase family. Tig subfamily.

The protein resides in the cytoplasm. The enzyme catalyses [protein]-peptidylproline (omega=180) = [protein]-peptidylproline (omega=0). Involved in protein export. Acts as a chaperone by maintaining the newly synthesized protein in an open conformation. Functions as a peptidyl-prolyl cis-trans isomerase. The polypeptide is Trigger factor (Desulforudis audaxviator (strain MP104C)).